Consider the following 417-residue polypeptide: Histidine--tRNA ligase (417 aa).

It belongs to the class-II aminoacyl-tRNA synthetase family. In terms of assembly, homodimer.

It localises to the cytoplasm. The enzyme catalyses tRNA(His) + L-histidine + ATP = L-histidyl-tRNA(His) + AMP + diphosphate + H(+). The protein is Histidine--tRNA ligase of Nitratidesulfovibrio vulgaris (strain ATCC 29579 / DSM 644 / CCUG 34227 / NCIMB 8303 / VKM B-1760 / Hildenborough) (Desulfovibrio vulgaris).